A 136-amino-acid polypeptide reads, in one-letter code: Small ribosomal subunit protein bS16 (136 aa).

Residues 113–122 (LALKSHRRSA) show a composition bias toward basic residues. Positions 113–136 (LALKSHRRSAKKEAEAKAATGGEA) are disordered.

The protein belongs to the bacterial ribosomal protein bS16 family.

This Pelodictyon phaeoclathratiforme (strain DSM 5477 / BU-1) protein is Small ribosomal subunit protein bS16.